The chain runs to 612 residues: Sulfite reductase [NADPH] hemoprotein beta-component (612 aa).

The segment at 1–26 (MDDHKPIETPDGPAVDTPGIGARRYE) is disordered. Cys469, Cys475, Cys514, and Cys518 together coordinate [4Fe-4S] cluster. Position 518 (Cys518) interacts with siroheme.

This sequence belongs to the nitrite and sulfite reductase 4Fe-4S domain family. In terms of assembly, alpha(8)-beta(8). The alpha component is a flavoprotein, the beta component is a hemoprotein. Siroheme is required as a cofactor. The cofactor is [4Fe-4S] cluster.

It catalyses the reaction hydrogen sulfide + 3 NADP(+) + 3 H2O = sulfite + 3 NADPH + 4 H(+). The protein operates within sulfur metabolism; hydrogen sulfide biosynthesis; hydrogen sulfide from sulfite (NADPH route): step 1/1. Its function is as follows. Component of the sulfite reductase complex that catalyzes the 6-electron reduction of sulfite to sulfide. This is one of several activities required for the biosynthesis of L-cysteine from sulfate. This Methylorubrum extorquens (strain ATCC 14718 / DSM 1338 / JCM 2805 / NCIMB 9133 / AM1) (Methylobacterium extorquens) protein is Sulfite reductase [NADPH] hemoprotein beta-component.